Reading from the N-terminus, the 73-residue chain is MIPALTPEERQKLRSAILHRMQLELETTEKLIENIKEETLKKLNLLQQPDATSAPQSKELIREVLEQEGRRIE.

This sequence belongs to the borealin family. As to quaternary structure, component of the aurora kinase complex composed of at least BIR1, BNL1, IPL1 and SLI15.

Its subcellular location is the nucleus. The protein resides in the cytoplasm. It is found in the cytoskeleton. It localises to the spindle. Functionally, component of the aurora kinase complex, also called chromosomal passenger complex (CPC), essential for chromosome segregation and metaphase chromosome alignment. Mediates the SLI15-BIR1 interaction within the CPC. This chain is N-terminal-borealin-like protein (NBL1), found in Saccharomyces cerevisiae (strain ATCC 204508 / S288c) (Baker's yeast).